A 154-amino-acid chain; its full sequence is 6,7-dimethyl-8-ribityllumazine synthase (154 aa).

5-amino-6-(D-ribitylamino)uracil-binding positions include Phe22, Ala56–Glu58, and Thr80–Ile82. Ala85–Thr86 is a binding site for (2S)-2-hydroxy-3-oxobutyl phosphate. The active-site Proton donor is His88. Position 113 (Phe113) interacts with 5-amino-6-(D-ribitylamino)uracil. Arg127 lines the (2S)-2-hydroxy-3-oxobutyl phosphate pocket.

The protein belongs to the DMRL synthase family. Forms an icosahedral capsid composed of 60 subunits, arranged as a dodecamer of pentamers.

It carries out the reaction (2S)-2-hydroxy-3-oxobutyl phosphate + 5-amino-6-(D-ribitylamino)uracil = 6,7-dimethyl-8-(1-D-ribityl)lumazine + phosphate + 2 H2O + H(+). It functions in the pathway cofactor biosynthesis; riboflavin biosynthesis; riboflavin from 2-hydroxy-3-oxobutyl phosphate and 5-amino-6-(D-ribitylamino)uracil: step 1/2. In terms of biological role, catalyzes the formation of 6,7-dimethyl-8-ribityllumazine by condensation of 5-amino-6-(D-ribitylamino)uracil with 3,4-dihydroxy-2-butanone 4-phosphate. This is the penultimate step in the biosynthesis of riboflavin. In Bacillus pumilus (strain SAFR-032), this protein is 6,7-dimethyl-8-ribityllumazine synthase.